The chain runs to 286 residues: Bark agglutinin I polypeptide B (286 aa).

An N-terminal signal peptide occupies residues 1 to 31 (MASYKFKTQNSFLLLLSISFFFLLLLNKVNS). A glycan (N-linked (GlcNAc...) asparagine) is linked at asparagine 148. 2 residues coordinate Mn(2+): glutamate 157 and aspartate 159. Positions 159, 163, and 167 each coordinate Ca(2+). Residues aspartate 167 and histidine 172 each coordinate Mn(2+).

It belongs to the leguminous lectin family. In terms of assembly, RPbAI is composed of two polypeptides, A and B, that associate into five different tetrameric isolectins. The A4 combination is the only one devoid of agglutination activity. Isoform B4 displays maximal agglutination activity. Mostly in the axial and ray parenchymal cells of the inner bark. Fewer in the axial and ray parenchymal cells of the xylem. Strong expression in bark. The lectin accumulates in the inner bark in autumn and winter and disappears in may.

In terms of biological role, bark lectins are storage proteins that probably maintain stocks of nitrogen during dormant period. Self-aggregatable molecules that can bind their own carbohydrate side chains. They could also play a role in the plant's defense against phytophagous invertebrates or herbivorous higher animals. The polypeptide is Bark agglutinin I polypeptide B (Robinia pseudoacacia (Black locust)).